A 381-amino-acid chain; its full sequence is Tryptophan--tRNA ligase (381 aa).

Residues 82–90 (PSLGMHIGH) carry the 'HIGH' region motif. The 'KMSKS' region motif lies at 254 to 258 (KMSSS).

It belongs to the class-I aminoacyl-tRNA synthetase family.

Its subcellular location is the cytoplasm. The enzyme catalyses tRNA(Trp) + L-tryptophan + ATP = L-tryptophyl-tRNA(Trp) + AMP + diphosphate + H(+). The sequence is that of Tryptophan--tRNA ligase from Sulfurisphaera tokodaii (strain DSM 16993 / JCM 10545 / NBRC 100140 / 7) (Sulfolobus tokodaii).